The chain runs to 326 residues: MYGIEYTTVLTFLISVILLNYVLKSLTRIMDFIIYRFLLIIVILSPLLDAQNYGINLPITGSMDTPYTNSTREEVFLTSTLCLYYPTEAATEINDNSWKDTLSQLFLTKGWPTGSIYFKDYTDIASFSVDPQLYCDYNLVLMKYDATLQLDMSELADLLLNEWLCNPMDITLYYYQQTDEANKWISMGSSCTIKVCPLNTQTLGIGCLTTDTNTFEEVATAEKLVITDVVDGVNHKLKVTTDTCTIRNCKKLGPRENVAVIQVGGSDVLDITADPTTAPQTERMMRVNWKKWWQVFYTIVDYVNQIVQAMSKRSRSLNSAAFYYRV.

The N-terminal stretch at 1–50 (MYGIEYTTVLTFLISVILLNYVLKSLTRIMDFIIYRFLLIIVILSPLLDA) is a signal peptide. A glycan (N-linked (GlcNAc...) asparagine; by host) is linked at Asn69. Disulfide bonds link Cys82–Cys135, Cys165–Cys249, Cys191–Cys244, and Cys196–Cys207. Asp95 serves as a coordination point for Ca(2+). A CNP motif; interaction with ITGAV/ITGB3 region spans residues 165-167 (CNP). The Ca(2+) site is built by Gln177, Gly206, Thr214, Glu216, Asp228, Val229, and Asp231. The interval 253-255 (GPR) is GPR motif; interaction with ITGAX/ITGB2. Asp301 provides a ligand contact to Ca(2+).

Belongs to the rotavirus VP7 family. Homotrimer; disulfide-linked. 2 Ca(2+) ions bound at each subunit interface in the trimer hold the trimer together. Interacts with the intermediate capsid protein VP6. Interacts with the outer capsid protein VP5*. Post-translationally, N-glycosylated. In terms of processing, the N-terminus is blocked possibly by pyroglutamic acid.

Its subcellular location is the virion. The protein localises to the host endoplasmic reticulum lumen. Calcium-binding protein that interacts with rotavirus cell receptors once the initial attachment by VP4 has been achieved. Rotavirus attachment and entry into the host cell probably involves multiple sequential contacts between the outer capsid proteins VP4 and VP7, and the cell receptors. Following entry into the host cell, low intracellular or intravesicular Ca(2+) concentration probably causes the calcium-stabilized VP7 trimers to dissociate from the virion. This step is probably necessary for the membrane-disrupting entry step and the release of VP4, which is locked onto the virion by VP7. The protein is Outer capsid glycoprotein VP7 of Rotavirus A (strain RVA/Human/United States/M/1976/G3P[X]) (RV-A).